The following is a 613-amino-acid chain: Ribosome-associated molecular chaperone SSB1 (613 aa).

The nucleotide binding domain (NBD) stretch occupies residues 1–391; sequence MAEGVFSGAI…ILTGSNLSDD (391 aa). ATP contacts are provided by residues 16–18, Lys-73, 205–207, 271–278, and Gly-342; these read TTY, GGT, and ERAKRTLS. The segment at 392–402 is inter-domain linker; the sequence is TKDLLLLDVAP. Residues 403-613 form a substrate binding domain (SBD) region; the sequence is LSLGVAMQGD…RVVTKAMATR (211 aa). The interval 516-612 is lid domain (SBDalpha); that stretch reads SEDIEKMVSQ…KRVVTKAMAT (97 aa). The short motif at 574–582 is the Nuclear export signal element; it reads VEAALADAF.

Belongs to the heat shock protein 70 family. Ssb-type Hsp70 subfamily. In terms of assembly, binds to ribosomes. Binds close to the ribosomal tunnel exit via contacts with both ribosomal proteins and rRNA. Directly interacts with nascent polypeptides. This interaction is dependent on the ribosome-associated complex (RAC). Interacts with SSE1. Interacts with FES1.

It is found in the cytoplasm. It carries out the reaction ATP + H2O = ADP + phosphate + H(+). Ribosome-bound, Hsp70-type chaperone that assists in the cotranslational folding of newly synthesized proteins in the cytosol. Stimulates folding by interacting with nascent chains, binding to short, largely hydrophobic sequences exposed by unfolded proteins, thereby stabilizing longer, more slowly translated, and aggregation-prone nascent polypeptides and domains that cannot fold stably until fully synthesized. The Hsp70-protein substrate interaction depends on ATP-binding and on allosteric regulation between the NBD and the SBD. The ATP-bound state is characterized by a fast exchange rate of substrate (low affinity state), while in the ADP-bound state exchange is much slower (high affinity state). During the Hsp70 cycle, the chaperone switches between the ATP-bound state (open conformation) and the ADP-bound state (closed conformation) by major conformational rearrangements involving mainly the lid domain. Ssb cooperates with a specific Hsp40/Hsp70 co-chaperone termed the ribosome-associated complex (RAC), which stimulates the ATPase activity of the ribosome-associated pool of Ssbs and switches it to the high affinity substrate binding state. Hsp110 chaperone SSE1 and FES1 act as nucleotide exchange factors that cause substrate release. The polypeptide is Ribosome-associated molecular chaperone SSB1 (SSB1) (Eremothecium gossypii (strain ATCC 10895 / CBS 109.51 / FGSC 9923 / NRRL Y-1056) (Yeast)).